A 165-amino-acid polypeptide reads, in one-letter code: Glutamyl-tRNA(Gln) amidotransferase subunit F, mitochondrial (165 aa).

Residues 1–19 (MKSILRSTTRNLITSSRRF) constitute a mitochondrion transit peptide.

This sequence belongs to the GatF family. Subunit of the heterotrimeric GatFAB amidotransferase (AdT) complex, composed of A, B and F subunits.

Its subcellular location is the mitochondrion inner membrane. It carries out the reaction L-glutamyl-tRNA(Gln) + L-glutamine + ATP + H2O = L-glutaminyl-tRNA(Gln) + L-glutamate + ADP + phosphate + H(+). Allows the formation of correctly charged Gln-tRNA(Gln) through the transamidation of misacylated Glu-tRNA(Gln) in the mitochondria. The reaction takes place in the presence of glutamine and ATP through an activated gamma-phospho-Glu-tRNA(Gln). Required for proper protein synthesis within the mitochondrion. The polypeptide is Glutamyl-tRNA(Gln) amidotransferase subunit F, mitochondrial (Candida albicans (strain WO-1) (Yeast)).